The following is a 137-amino-acid chain: Small ribosomal subunit protein uS12 (137 aa).

2 disordered regions span residues 1–21 and 34–57; these read MPTINQLVRKPRKSKVEKSDS and VHTKLAAPQKRGVATRVGTMTPKK.

It belongs to the universal ribosomal protein uS12 family. In terms of assembly, part of the 30S ribosomal subunit. Contacts proteins S8 and S17. May interact with IF1 in the 30S initiation complex.

In terms of biological role, with S4 and S5 plays an important role in translational accuracy. Functionally, interacts with and stabilizes bases of the 16S rRNA that are involved in tRNA selection in the A site and with the mRNA backbone. Located at the interface of the 30S and 50S subunits, it traverses the body of the 30S subunit contacting proteins on the other side and probably holding the rRNA structure together. The combined cluster of proteins S8, S12 and S17 appears to hold together the shoulder and platform of the 30S subunit. In Streptococcus mutans serotype c (strain ATCC 700610 / UA159), this protein is Small ribosomal subunit protein uS12.